The sequence spans 396 residues: MPIRKVMKANEAAAWAAKLAKPKVIAAFPITPSTLIPEKISEFVANGELDAEFIKVESEHSAISACVGAAAAGVRTFTATASQGLALMHEILFIAAGMRLPIVMAIGNRALSAPINIWNDWQDTISQRDTGWMQFYAENNQEALDLILIAYKVAEDERVLLPAMVGFDAFILTHTVEPVEIPDQEVVDEFLGEYEPKHAYIDPARPITQGSLAFPAHYMESRYTVWEAMERAKKVIDEAFAEFEKKFGRKYQKIEEYKTEDADIIFVTMGSLAGTLKEWIDKKREEGYKVGAAKITVYRPFPVEEIRELAKKAKVLAFLEKNITIGLYGAVFTDASAALINESEKPLMVDFIVGLGGRDVTFNQLDEALEIAEKALKEGKVENPINWIGLRWELVK.

As to quaternary structure, heterotetramer of one alpha, one beta, one delta and one gamma chain.

The catalysed reaction is 2 oxidized [2Fe-2S]-[ferredoxin] + pyruvate + CoA = 2 reduced [2Fe-2S]-[ferredoxin] + acetyl-CoA + CO2 + H(+). The sequence is that of Pyruvate synthase subunit PorA (porA) from Pyrococcus furiosus (strain ATCC 43587 / DSM 3638 / JCM 8422 / Vc1).